Reading from the N-terminus, the 97-residue chain is Protein RADIALIS-like 6 (97 aa).

In terms of domain architecture, SANT spans 7-59 (SSISPWTFSQNKMFERALAVYDKDTPDRWHNVAKAVGGKTVEEVKRHYDILVE).

In terms of tissue distribution, expressed in the micropylar endosperm surrounding globular-stage embryos but no expression was detected elsewhere, including floral tissues.

It localises to the nucleus. In terms of biological role, probable transcription factor. The polypeptide is Protein RADIALIS-like 6 (RL6) (Arabidopsis thaliana (Mouse-ear cress)).